Consider the following 295-residue polypeptide: Shikimate dehydrogenase (NADP(+)) (295 aa).

Residues 22–24 and Ser69 each bind shikimate; that span reads SLS. Residue Lys73 is the Proton acceptor of the active site. Shikimate is bound by residues Asn94 and Asp111. NADP(+) contacts are provided by residues 135–139 and Val236; that span reads GAGGA. Tyr238 serves as a coordination point for shikimate. Gly260 is an NADP(+) binding site.

This sequence belongs to the shikimate dehydrogenase family. As to quaternary structure, homodimer.

The enzyme catalyses shikimate + NADP(+) = 3-dehydroshikimate + NADPH + H(+). The protein operates within metabolic intermediate biosynthesis; chorismate biosynthesis; chorismate from D-erythrose 4-phosphate and phosphoenolpyruvate: step 4/7. Involved in the biosynthesis of the chorismate, which leads to the biosynthesis of aromatic amino acids. Catalyzes the reversible NADPH linked reduction of 3-dehydroshikimate (DHSA) to yield shikimate (SA). In Streptococcus uberis (strain ATCC BAA-854 / 0140J), this protein is Shikimate dehydrogenase (NADP(+)).